A 285-amino-acid chain; its full sequence is Ribosomal RNA small subunit methyltransferase H (285 aa).

S-adenosyl-L-methionine is bound by residues 34 to 36 (AGH), aspartate 51, phenylalanine 75, aspartate 96, and histidine 103. The segment at 258 to 285 (PLVPSEKEAAQNPRARSAKLRAAEKEAP) is disordered.

Belongs to the methyltransferase superfamily. RsmH family.

It is found in the cytoplasm. It catalyses the reaction cytidine(1402) in 16S rRNA + S-adenosyl-L-methionine = N(4)-methylcytidine(1402) in 16S rRNA + S-adenosyl-L-homocysteine + H(+). Its function is as follows. Specifically methylates the N4 position of cytidine in position 1402 (C1402) of 16S rRNA. The polypeptide is Ribosomal RNA small subunit methyltransferase H (Thermus thermophilus (strain ATCC BAA-163 / DSM 7039 / HB27)).